We begin with the raw amino-acid sequence, 469 residues long: MKHIRTRFAPSPTGYLHIGGVRTALFSWLFARQNNGAFILRIEDTDVARSTQASVDAILEGLRWLQIDWNEGPYYQSQRMDRYREVIEQLVKSDDAYRCYCSKERLIKLRNTQLKNKQKPRYDGFCRDKAPRQSNEPFVIRFRNPVEGAVVFDDLIRGTISIDNRELDDLIIARSDGGPTYNLTVVVDDWDMKITHVIRGDDHINNTPRQINILHALGAELPHYGHVPMILGPDGKRLSKRHGAVSVLQYRDEGYLPEALMNYLIRLGWAHGDQEIFSREEMVQLFDISAVSRSPAAFNPEKLLWLNQHYLKTVSPTIIAEAFATQLEKAGTDLRNGPSLEQVIALQAERTKTLKEMAQRSLYFYQEVRSYDEKAARKHLLATIVEPLQRVRERLASLPSWEKEAIHEVIVETAQLHQLKLGQLAQPIRVALTGDTVSPPIDATLYLIGRDSALKRLDHAIRFIHQGMG.

Positions proline 10–glycine 20 match the 'HIGH' region motif. Residues cysteine 99, cysteine 101, cysteine 126, and aspartate 128 each coordinate Zn(2+). The 'KMSKS' region motif lies at arginine 237 to arginine 241. ATP is bound at residue lysine 240.

Belongs to the class-I aminoacyl-tRNA synthetase family. Glutamate--tRNA ligase type 1 subfamily. In terms of assembly, monomer. Zn(2+) serves as cofactor.

The protein resides in the cytoplasm. It catalyses the reaction tRNA(Glu) + L-glutamate + ATP = L-glutamyl-tRNA(Glu) + AMP + diphosphate. Functionally, catalyzes the attachment of glutamate to tRNA(Glu) in a two-step reaction: glutamate is first activated by ATP to form Glu-AMP and then transferred to the acceptor end of tRNA(Glu). The chain is Glutamate--tRNA ligase 1 from Coxiella burnetii (strain RSA 331 / Henzerling II).